Reading from the N-terminus, the 935-residue chain is Isoleucine--tRNA ligase (935 aa).

Residues 58-68 carry the 'HIGH' region motif; it reads PYANGSIHVGH. Glu-558 provides a ligand contact to L-isoleucyl-5'-AMP. Positions 599–603 match the 'KMSKS' region motif; sequence KMSKS. ATP is bound at residue Lys-602. Zn(2+) contacts are provided by Cys-897, Cys-900, Cys-917, and Cys-920.

The protein belongs to the class-I aminoacyl-tRNA synthetase family. IleS type 1 subfamily. In terms of assembly, monomer. The cofactor is Zn(2+).

It localises to the cytoplasm. The enzyme catalyses tRNA(Ile) + L-isoleucine + ATP = L-isoleucyl-tRNA(Ile) + AMP + diphosphate. Catalyzes the attachment of isoleucine to tRNA(Ile). As IleRS can inadvertently accommodate and process structurally similar amino acids such as valine, to avoid such errors it has two additional distinct tRNA(Ile)-dependent editing activities. One activity is designated as 'pretransfer' editing and involves the hydrolysis of activated Val-AMP. The other activity is designated 'posttransfer' editing and involves deacylation of mischarged Val-tRNA(Ile). This chain is Isoleucine--tRNA ligase, found in Francisella tularensis subsp. novicida (strain U112).